The sequence spans 23 residues: Coenzyme PQQ synthesis protein A (23 aa).

Residues 15–19 (EVTLY) constitute a cross-link (pyrroloquinoline quinone (Glu-Tyr)).

It belongs to the PqqA family.

Its pathway is cofactor biosynthesis; pyrroloquinoline quinone biosynthesis. Functionally, required for coenzyme pyrroloquinoline quinone (PQQ) biosynthesis. PQQ is probably formed by cross-linking a specific glutamate to a specific tyrosine residue and excising these residues from the peptide. The polypeptide is Coenzyme PQQ synthesis protein A (Klebsiella pneumoniae (strain 342)).